The primary structure comprises 93 residues: Leydig cell tumor 10 kDa protein (93 aa).

The disordered stretch occupies residues 1–41 (MAQGQRKFQAQKPKSKAAAAERSRGPRKGGRVIGPKKARVV). Residues 7-18 (KFQAQKPKSKAA) are compositionally biased toward low complexity. Residues 25–39 (GPRKGGRVIGPKKAR) are compositionally biased toward basic residues.

The protein belongs to the UPF0390 family. As to expression, leydig cell tumor, testis and placenta.

Its function is as follows. May have a potential role in hypercalcemia of malignancy. The chain is Leydig cell tumor 10 kDa protein from Rattus norvegicus (Rat).